We begin with the raw amino-acid sequence, 145 residues long: D-aminoacyl-tRNA deacylase (145 aa).

The Gly-cisPro motif, important for rejection of L-amino acids signature appears at 137–138; it reads GP.

The protein belongs to the DTD family. As to quaternary structure, homodimer.

It is found in the cytoplasm. The catalysed reaction is glycyl-tRNA(Ala) + H2O = tRNA(Ala) + glycine + H(+). It carries out the reaction a D-aminoacyl-tRNA + H2O = a tRNA + a D-alpha-amino acid + H(+). In terms of biological role, an aminoacyl-tRNA editing enzyme that deacylates mischarged D-aminoacyl-tRNAs. Also deacylates mischarged glycyl-tRNA(Ala), protecting cells against glycine mischarging by AlaRS. Acts via tRNA-based rather than protein-based catalysis; rejects L-amino acids rather than detecting D-amino acids in the active site. By recycling D-aminoacyl-tRNA to D-amino acids and free tRNA molecules, this enzyme counteracts the toxicity associated with the formation of D-aminoacyl-tRNA entities in vivo and helps enforce protein L-homochirality. The polypeptide is D-aminoacyl-tRNA deacylase (Enterobacter sp. (strain 638)).